A 151-amino-acid chain; its full sequence is Ocs element-binding factor 1 (151 aa).

Residues Met1 to Asp17 are compositionally biased toward polar residues. Positions Met1–Gln47 are disordered. Positions Ala22–Arg39 are enriched in basic and acidic residues. In terms of domain architecture, bZIP spans Thr24–Leu87. A basic motif region spans residues Arg26–Lys45. The leucine-zipper stretch occupies residues Leu52 to Leu59.

Belongs to the bZIP family. In terms of tissue distribution, roots and shoots of young plants, and basal portion of leaves.

The protein localises to the nucleus. In terms of biological role, may contribute to developmentally specific patterns of gene expression. Binds specifically to ocs elements which are transcriptional enhancer found in the promoters of several plant genes. OCSBF-1 is able to bind to a site within each half of the ocs element as well as to animal AP-1 and CREB sites. This is Ocs element-binding factor 1 (OBF1) from Zea mays (Maize).